A 98-amino-acid polypeptide reads, in one-letter code: Large ribosomal subunit protein uL23 (98 aa).

It belongs to the universal ribosomal protein uL23 family. In terms of assembly, part of the 50S ribosomal subunit. Contacts protein L29, and trigger factor when it is bound to the ribosome.

Functionally, one of the early assembly proteins it binds 23S rRNA. One of the proteins that surrounds the polypeptide exit tunnel on the outside of the ribosome. Forms the main docking site for trigger factor binding to the ribosome. This chain is Large ribosomal subunit protein uL23, found in Methylobacterium nodulans (strain LMG 21967 / CNCM I-2342 / ORS 2060).